The following is a 188-amino-acid chain: Large ribosomal subunit protein eL18B (188 aa).

Positions 153–188 (GKAPGTPHSRTKPYVLSKGRKFERARGRRASRGYKN) are disordered. Over residues 178–188 (RGRRASRGYKN) the composition is skewed to basic residues.

This sequence belongs to the eukaryotic ribosomal protein eL18 family. Component of the large ribosomal subunit.

It localises to the cytoplasm. It is found in the cytosol. Its subcellular location is the rough endoplasmic reticulum. Its function is as follows. Component of the large ribosomal subunit. The ribosome is a large ribonucleoprotein complex responsible for the synthesis of proteins in the cell. In Xenopus laevis (African clawed frog), this protein is Large ribosomal subunit protein eL18B (rpl18-b).